The primary structure comprises 129 residues: Small ribosomal subunit protein uS11 (129 aa).

This sequence belongs to the universal ribosomal protein uS11 family. In terms of assembly, part of the 30S ribosomal subunit. Interacts with proteins S7 and S18. Binds to IF-3.

Its function is as follows. Located on the platform of the 30S subunit, it bridges several disparate RNA helices of the 16S rRNA. Forms part of the Shine-Dalgarno cleft in the 70S ribosome. The chain is Small ribosomal subunit protein uS11 from Staphylococcus haemolyticus (strain JCSC1435).